A 290-amino-acid polypeptide reads, in one-letter code: Ciliary microtubule inner protein 6 (290 aa).

Residues 76–112 (ENQGDWWPHGKGLENPFQPPYDTKSTQRSDFKKPTCP) are disordered. Mn regions lie at residues 128-160 (GIVP…ARKT) and 213-246 (SAES…IRVA). Positions 197 to 228 (SGSCSSEQSKKTEKGNSAESKMISPGLCRQNS) are disordered.

It localises to the cell projection. The protein resides in the cilium. The chain is Ciliary microtubule inner protein 6 (CIMIP6) from Bos taurus (Bovine).